A 374-amino-acid polypeptide reads, in one-letter code: Putative F-box protein At5g60060 (374 aa).

Positions 9 to 61 (SQWSDLPLDILELISDRLDHDSSDTIHLLCLRSVCATWRLSLPLSNKNNRLSK) constitute an F-box domain.

This is Putative F-box protein At5g60060 from Arabidopsis thaliana (Mouse-ear cress).